Consider the following 1024-residue polypeptide: Multidrug resistance protein MdtC (1024 aa).

The next 12 membrane-spanning stretches (helical) occupy residues 12–32 (VATTLLTLAITLSGVIGFSLL), 333–353 (EVERSLVIAVALVILVVFLFL), 360–380 (LIPAVAVPVSLIGTFTAMYLC), 387–407 (LSLMALTIATGFVVDDAIVVL), 431–451 (VGFTVLSMSISLVAVFIPLLL), 463–483 (FAVTLSVAIGISLVISLTLTP), 528–548 (WVMVVLLSTIALNVWLYISIP), 853–873 (LWLIMAAIATVYIVLGILYES), 875–895 (VHPLTILSTLPSAGVGALLAL), 897–917 (LFDAPFSLIALIGIMLLIGIV), 953–973 (PILMTTLAALFGALPLVISSG), and 984–1004 (ITIVGGLVMSQLLTLYTTPVV).

This sequence belongs to the resistance-nodulation-cell division (RND) (TC 2.A.6) family. MdtC subfamily. As to quaternary structure, part of a tripartite efflux system composed of MdtA, MdtB and MdtC. MdtC forms a heteromultimer with MdtB.

The protein resides in the cell inner membrane. This Yersinia enterocolitica serotype O:8 / biotype 1B (strain NCTC 13174 / 8081) protein is Multidrug resistance protein MdtC.